Reading from the N-terminus, the 60-residue chain is U-actitoxin-Avd12b (60 aa).

Positions 1 to 6 are cleaved as a signal peptide; that stretch reads SKEGMS. The propeptide occupies 7-12; the sequence is YEEPEN. Positions 14-56 constitute an EGF-like domain; the sequence is EGVACTGQYAESFCLNGGTCRYIQSIGEYYCICVGDYTGHRCE. Disulfide bonds link C18–C33, C27–C44, and C46–C55.

Belongs to the EGF domain peptide family.

The protein localises to the secreted. It localises to the nematocyst. In terms of biological role, has both toxic and EGF activity. Its EGF activity consists of rounding cells (morphological change) and inducing tyrosine phosphorylation of the EGFR in A431 cells, but with a lower potency that human EGF. The protein is U-actitoxin-Avd12b of Anemonia viridis (Snakelocks anemone).